Reading from the N-terminus, the 184-residue chain is ATP synthase subunit b, chloroplastic (184 aa).

A helical transmembrane segment spans residues 27–49 (LATNLINLSVVLGVLIFFGKGVL).

It belongs to the ATPase B chain family. F-type ATPases have 2 components, F(1) - the catalytic core - and F(0) - the membrane proton channel. F(1) has five subunits: alpha(3), beta(3), gamma(1), delta(1), epsilon(1). F(0) has four main subunits: a(1), b(1), b'(1) and c(10-14). The alpha and beta chains form an alternating ring which encloses part of the gamma chain. F(1) is attached to F(0) by a central stalk formed by the gamma and epsilon chains, while a peripheral stalk is formed by the delta, b and b' chains.

It localises to the plastid. Its subcellular location is the chloroplast thylakoid membrane. In terms of biological role, f(1)F(0) ATP synthase produces ATP from ADP in the presence of a proton or sodium gradient. F-type ATPases consist of two structural domains, F(1) containing the extramembraneous catalytic core and F(0) containing the membrane proton channel, linked together by a central stalk and a peripheral stalk. During catalysis, ATP synthesis in the catalytic domain of F(1) is coupled via a rotary mechanism of the central stalk subunits to proton translocation. Its function is as follows. Component of the F(0) channel, it forms part of the peripheral stalk, linking F(1) to F(0). The sequence is that of ATP synthase subunit b, chloroplastic from Spinacia oleracea (Spinach).